A 286-amino-acid polypeptide reads, in one-letter code: Polyamine aminopropyltransferase (286 aa).

Positions 5 to 238 (PLWHETLHDH…GIMTFAWASD (234 aa)) constitute a PABS domain. Gln-33 lines the S-methyl-5'-thioadenosine pocket. The spermidine site is built by His-64 and Asp-88. S-methyl-5'-thioadenosine contacts are provided by residues Glu-108 and 140–141 (DG). The Proton acceptor role is filled by Asp-158. 158-161 (DCTD) contributes to the spermidine binding site. Residue Pro-165 participates in S-methyl-5'-thioadenosine binding.

The protein belongs to the spermidine/spermine synthase family. Homodimer or homotetramer.

The protein localises to the cytoplasm. It carries out the reaction S-adenosyl 3-(methylsulfanyl)propylamine + putrescine = S-methyl-5'-thioadenosine + spermidine + H(+). The protein operates within amine and polyamine biosynthesis; spermidine biosynthesis; spermidine from putrescine: step 1/1. Its function is as follows. Catalyzes the irreversible transfer of a propylamine group from the amino donor S-adenosylmethioninamine (decarboxy-AdoMet) to putrescine (1,4-diaminobutane) to yield spermidine. This is Polyamine aminopropyltransferase from Klebsiella pneumoniae (strain 342).